Here is a 662-residue protein sequence, read N- to C-terminus: Protein translocase subunit SecA 2 (662 aa).

Residues Gln110, 128–132 (GEGKT), and Asp538 each bind ATP.

The protein belongs to the SecA family. In terms of assembly, monomer and homodimer. Part of the essential Sec protein translocation apparatus which comprises SecA, SecYEG and auxiliary proteins SecDF. Other proteins may also be involved.

The protein resides in the cell inner membrane. Its subcellular location is the cytoplasm. The enzyme catalyses ATP + H2O + cellular proteinSide 1 = ADP + phosphate + cellular proteinSide 2.. Functionally, part of the Sec protein translocase complex. Interacts with the SecYEG preprotein conducting channel. Has a central role in coupling the hydrolysis of ATP to the transfer of proteins into and across the cell membrane, serving as an ATP-driven molecular motor driving the stepwise translocation of polypeptide chains across the membrane. The polypeptide is Protein translocase subunit SecA 2 (Chlorobium chlorochromatii (strain CaD3)).